The primary structure comprises 210 residues: MKFLNQEKRKQLLNERHSCKMFDKHYTFSSEELEEIAEIARLSPSSYNTQPWHFVMVTNKDLKNQIAAHSYFNKDMIESASALVVVCSLKPVELLPNGHYMQNLYDEPYRSRTLLSFAQMLDLRFNHSMQKLESYILEQCYIAVGQICLGVSLMGLDSCIIGGFDALKVGEVLSQRINDPKIACLIALGKRVKEASQKSRKPKNHAITWL.

150–155 (GVSLMG) lines the NADP(+) pocket.

The protein belongs to the nitroreductase family.

Reduction of a variety of nitroaromatic compounds using NADPH as source of reducing equivalents; two electrons are transferred. The polypeptide is Oxygen-insensitive NADPH nitroreductase (rdxA) (Helicobacter acinonychis (strain Sheeba)).